Reading from the N-terminus, the 345-residue chain is Olfactory receptor 11G2 (345 aa).

Residues 1-62 (MHFLSQNDLN…LGFPCPREGQ (62 aa)) lie on the Extracellular side of the membrane. The N-linked (GlcNAc...) asparagine glycan is linked to Asn-43. Residues 63–83 (ILLFVLFTVVYLLTLMGNGSI) form a helical membrane-spanning segment. Residues 84-92 (ICAVHWDQR) lie on the Cytoplasmic side of the membrane. Residues 93 to 113 (LHAPMYILLANFSFLEICYVT) traverse the membrane as a helical segment. Over 114-135 (STVPSMLANFLSDTKIISFSGC) the chain is Extracellular. Cys-135 and Cys-217 form a disulfide bridge. A helical transmembrane segment spans residues 136–156 (FLQFYFFFSLGSTECFFLAVM). Over 157-181 (AFDRYLAICRPLRYPTIMTRRLCTN) the chain is Cytoplasmic. The helical transmembrane segment at 182-202 (LVVNCWVLGFIWFLIPIVNIS) threads the bilayer. Residues 203–241 (QMSFCGSRIIDHFLCDPAPLLTLTCKKGPVIELVFSVLS) are Extracellular-facing. A helical transmembrane segment spans residues 242 to 264 (PLPVFMLFLFIVGSYALVVRAVL). Over 265 to 275 (RVPSAAGRRKA) the chain is Cytoplasmic. Residues 276-296 (FSTCGSHLAVVSLFYGSVLVM) form a helical membrane-spanning segment. Residues 297 to 309 (YGSPPSKNEAGKQ) are Extracellular-facing. The helical transmembrane segment at 310-330 (KTVTLFYSVVTPLLNPVIYSL) threads the bilayer. Over 331 to 345 (RNKDMRKALKKFWGT) the chain is Cytoplasmic.

The protein belongs to the G-protein coupled receptor 1 family.

Its subcellular location is the cell membrane. Functionally, odorant receptor. This chain is Olfactory receptor 11G2 (OR11G2), found in Homo sapiens (Human).